The sequence spans 89 residues: UPF0367 protein CYB_2632 (89 aa).

Residues 69 to 89 (SKSGSASPMGTRPGFLAQLQS) form a disordered region.

The protein belongs to the UPF0367 family.

This chain is UPF0367 protein CYB_2632, found in Synechococcus sp. (strain JA-2-3B'a(2-13)) (Cyanobacteria bacterium Yellowstone B-Prime).